We begin with the raw amino-acid sequence, 247 residues long: Fibroblast growth factor 14 (247 aa).

Disordered regions lie at residues 1–38 and 216–247; these read MAAA…KNRG and ETVP…CKTT. Residues 15-25 show a composition bias toward basic and acidic residues; that stretch reads QAREQHWDRPS.

Belongs to the heparin-binding growth factors family. In terms of assembly, interacts with SCN8A.

Its subcellular location is the nucleus. Probably involved in nervous system development and function. This is Fibroblast growth factor 14 (Fgf14) from Rattus norvegicus (Rat).